A 362-amino-acid chain; its full sequence is 3-isopropylmalate dehydrogenase (362 aa).

78–91 (GPKWETLPPDEQPE) serves as a coordination point for NAD(+). Residues Arg99, Arg109, Arg138, and Asp227 each contribute to the substrate site. 3 residues coordinate Mg(2+): Asp227, Asp251, and Asp255. An NAD(+)-binding site is contributed by 285-297 (GSAPDIAGQGIAN).

This sequence belongs to the isocitrate and isopropylmalate dehydrogenases family. LeuB type 1 subfamily. As to quaternary structure, homodimer. Requires Mg(2+) as cofactor. Mn(2+) is required as a cofactor.

The protein resides in the cytoplasm. It carries out the reaction (2R,3S)-3-isopropylmalate + NAD(+) = 4-methyl-2-oxopentanoate + CO2 + NADH. It participates in amino-acid biosynthesis; L-leucine biosynthesis; L-leucine from 3-methyl-2-oxobutanoate: step 3/4. In terms of biological role, catalyzes the oxidation of 3-carboxy-2-hydroxy-4-methylpentanoate (3-isopropylmalate) to 3-carboxy-4-methyl-2-oxopentanoate. The product decarboxylates to 4-methyl-2 oxopentanoate. The chain is 3-isopropylmalate dehydrogenase from Geobacter metallireducens (strain ATCC 53774 / DSM 7210 / GS-15).